The following is a 607-amino-acid chain: Elongation factor 4 (607 aa).

Residues 11–193 (KSIRNFSIIA…QIVAKVPAPT (183 aa)) form the tr-type G domain. Residues 23 to 28 (DHGKST) and 140 to 143 (NKID) contribute to the GTP site.

This sequence belongs to the TRAFAC class translation factor GTPase superfamily. Classic translation factor GTPase family. LepA subfamily.

The protein localises to the cell membrane. It catalyses the reaction GTP + H2O = GDP + phosphate + H(+). In terms of biological role, required for accurate and efficient protein synthesis under certain stress conditions. May act as a fidelity factor of the translation reaction, by catalyzing a one-codon backward translocation of tRNAs on improperly translocated ribosomes. Back-translocation proceeds from a post-translocation (POST) complex to a pre-translocation (PRE) complex, thus giving elongation factor G a second chance to translocate the tRNAs correctly. Binds to ribosomes in a GTP-dependent manner. This is Elongation factor 4 from Exiguobacterium sibiricum (strain DSM 17290 / CCUG 55495 / CIP 109462 / JCM 13490 / 255-15).